Here is a 113-residue protein sequence, read N- to C-terminus: Protein Rev (113 aa).

The tract at residues 15–23 is homomultimerization; that stretch reads LIKFLYQSN. Residues 17–45 are disordered; that stretch reads KFLYQSNPPPSPEGTRQARRNRRRRWRQR. The short motif at 31–47 is the Nuclear localization signal and RNA-binding (RRE) element; it reads TRQARRNRRRRWRQRQR. Basic residues predominate over residues 33 to 45; that stretch reads QARRNRRRRWRQR. Positions 70 to 81 match the Nuclear export signal and binding to XPO1 motif; that stretch reads LQLPPLERLTLD. 2 positions are modified to phosphoserine; by host: serine 89 and serine 96. The disordered stretch occupies residues 89–113; the sequence is SGTQGVGSPQILVESPTILESGTKE.

This sequence belongs to the HIV-1 REV protein family. As to quaternary structure, homomultimer; when bound to the RRE. Multimeric assembly is essential for activity and may involve XPO1. Binds to human KPNB1, XPO1, TNPO1, RANBP5 and IPO7. Interacts with the viral Integrase. Interacts with human KHDRBS1. Interacts with human NAP1; this interaction decreases Rev multimerization and stimulates its activity. Interacts with human DEAD-box helicases DDX3 and DDX24; these interactions may serve for viral RNA export to the cytoplasm and packaging, respectively. Interacts with human PSIP1; this interaction may inhibit HIV-1 DNA integration by promoting dissociation of the Integrase-LEDGF/p75 complex. In terms of processing, asymmetrically arginine dimethylated at one site by host PRMT6. Methylation impairs the RNA-binding activity and export of viral RNA from the nucleus to the cytoplasm. Post-translationally, phosphorylated by protein kinase CK2. Presence of, and maybe binding to the N-terminus of the regulatory beta subunit of CK2 is necessary for CK2-mediated Rev's phosphorylation.

Its subcellular location is the host nucleus. It is found in the host nucleolus. It localises to the host cytoplasm. Functionally, escorts unspliced or incompletely spliced viral pre-mRNAs (late transcripts) out of the nucleus of infected cells. These pre-mRNAs carry a recognition sequence called Rev responsive element (RRE) located in the env gene, that is not present in fully spliced viral mRNAs (early transcripts). This function is essential since most viral proteins are translated from unspliced or partially spliced pre-mRNAs which cannot exit the nucleus by the pathway used by fully processed cellular mRNAs. Rev itself is translated from a fully spliced mRNA that readily exits the nucleus. Rev's nuclear localization signal (NLS) binds directly to KPNB1/Importin beta-1 without previous binding to KPNA1/Importin alpha-1. KPNB1 binds to the GDP bound form of RAN (Ran-GDP) and targets Rev to the nucleus. In the nucleus, the conversion from Ran-GDP to Ran-GTP dissociates Rev from KPNB1 and allows Rev's binding to the RRE in viral pre-mRNAs. Rev multimerization on the RRE via cooperative assembly exposes its nuclear export signal (NES) to the surface. Rev can then form a complex with XPO1/CRM1 and Ran-GTP, leading to nuclear export of the complex. Conversion from Ran-GTP to Ran-GDP mediates dissociation of the Rev/RRE/XPO1/RAN complex, so that Rev can return to the nucleus for a subsequent round of export. Beside KPNB1, also seems to interact with TNPO1/Transportin-1, RANBP5/IPO5 and IPO7/RANBP7 for nuclear import. The nucleoporin-like HRB/RIP is an essential cofactor that probably indirectly interacts with Rev to release HIV RNAs from the perinuclear region to the cytoplasm. This chain is Protein Rev, found in Human immunodeficiency virus type 1 group M subtype B (isolate JH32) (HIV-1).